A 511-amino-acid polypeptide reads, in one-letter code: MMDLDRIIDQLHIYEKKVLKAFEGSDKPLKPEEIAESQKIDIKSVMSASGALESRGFVRVMKDADEVVSLTEDGESCAREGLPERRLIEALKGEEELEMSELSRRAGLDKKEAGIGIGWLMRKGWGRISQGMVSAVSDETPERGADERLLELLLERGSVRIRELPDELRGALKDLKGRKGIVDIRKIKRHTIELTTEGRKLLERGIEIVEEATQVTHEHLKSGAWRKLHYRGYNIDAEYPLVYPGKMHPLRRIIDEIRSIFLKLGFTESRGPIVESAFWNFDCLFQPQDHAAREMQDTFYVKNPAVTDLPCEDLVRAVQDAHETGGSTGSEGWQYEWDRDVARQSVLRTHTTCVSARFLSENEPPLKMFSVGRVFRRETITYKHLPEFHQVEGIVAGDEVNFRNLLGILREFYRKLGFEVRFRPAYFPYTYLSTECEIYLPEKKSWIELGGAGMFRPEVLEPLGVETPVAAFGLGIERLAMIRFDIKDIRMLYQSDLGWLRGLPVTGDLEL.

L-phenylalanine-binding positions include T352, 390 to 392, Y429, and F455; that span reads QVE.

It belongs to the class-II aminoacyl-tRNA synthetase family. Phe-tRNA synthetase alpha subunit type 2 subfamily. Tetramer of two alpha and two beta subunits. Mg(2+) is required as a cofactor.

Its subcellular location is the cytoplasm. The catalysed reaction is tRNA(Phe) + L-phenylalanine + ATP = L-phenylalanyl-tRNA(Phe) + AMP + diphosphate + H(+). The polypeptide is Phenylalanine--tRNA ligase alpha subunit (Methanothermobacter thermautotrophicus (strain ATCC 29096 / DSM 1053 / JCM 10044 / NBRC 100330 / Delta H) (Methanobacterium thermoautotrophicum)).